A 558-amino-acid polypeptide reads, in one-letter code: MNFKSDIQIAQECSMENIKDIAKKLNIFEDEIELYGKYKAKIDYNLLKTTKGKNGKLILCTAINPTPAGEGKTTTSIGVADALARLDKSVVVALREPSMGPVFGIKGGAAGGGYAQVVPMEDINLHFTGDIHAMTAANNLLAALIDNHIYQGNKLNIDSRRVVWRRCVDMNDRQLRFVVDGLGGKVNGIPREDGFDITVASEIMAIFCLSTDINDLKERISKIVVGYTTEGNPVTAHDLKAEGAMAALLKDALKPNLVQTLEGTPAFVHGGPFANIAHGCNSIMATRMAMHFGDYVVTEAGFGADLGAEKFLDIKCRMAGLRPDAVIIVATVRALKYNGGTPKTKLNNENLETLEKGIPNLLKHVENITKVFKLPAVVALNAFPTDTEAELKLVEEKCREFGVSVKLSEVWAKGGEGGIEVAKEVLRLINEGKNDFQFAYDEKLPIRDKIRAIAQKIYGADGVTFTNQAEKEIDELEKLGFGKTPVCIAKTQYSLTDDQNKLGRPKGFKITVRQVSISAGAGFVVAITGSIMKMPGLPKVPAAEKIDVDENGVISGLF.

66–73 lines the ATP pocket; the sequence is TPAGEGKT.

The protein belongs to the formate--tetrahydrofolate ligase family.

The catalysed reaction is (6S)-5,6,7,8-tetrahydrofolate + formate + ATP = (6R)-10-formyltetrahydrofolate + ADP + phosphate. It participates in one-carbon metabolism; tetrahydrofolate interconversion. This Clostridium kluyveri (strain NBRC 12016) protein is Formate--tetrahydrofolate ligase.